The following is a 294-amino-acid chain: Segregation and condensation protein A (294 aa).

It belongs to the ScpA family. Component of a cohesin-like complex composed of ScpA, ScpB and the Smc homodimer, in which ScpA and ScpB bind to the head domain of Smc. The presence of the three proteins is required for the association of the complex with DNA.

Its subcellular location is the cytoplasm. In terms of biological role, participates in chromosomal partition during cell division. May act via the formation of a condensin-like complex containing Smc and ScpB that pull DNA away from mid-cell into both cell halves. The sequence is that of Segregation and condensation protein A from Ureaplasma parvum serovar 3 (strain ATCC 700970).